A 190-amino-acid chain; its full sequence is RNA-binding protein OPG065 (190 aa).

The 66-residue stretch at 5–70 folds into the Z-binding domain; the sequence is YIDERSDAEI…DIPPRWFMTT (66 aa). The DRBM domain maps to 117–184; it reads NPVTIINEYC…AKLAVDKLLG (68 aa).

This sequence belongs to the orthopoxvirus OPG065 family. Interacts with host G1P2/ISG15. Interacts with host EIF2AK2/PKR. Interacts with host ZBP1.

Functionally, RNA-binding protein that plays a role in the inhibition of multiple cellular antiviral responses activated by double-stranded RNA (dsRNA), such as inhibition of PKR activation, necroptosis, and IFN-mediated antiviral activities. Recognizes and binds Z-RNA structures via its Z-binding domain and dsRNA via its DRBM domain: RNA-binding activity is required to escape host ZBP1-dependent necroptosis. Mechanistically, the Z-binding domain binds Z-RNAs that are produced during vaccinia virus infection, thereby competing with Z-RNA detection by host ZBP1, suppressing ZBP1-dependent necroptosis. Acts as a key inhibitor of the interferon response by blocking the phosphorylation and subsequent activation of IRF3 and IRF7 kinases that are required for interferon-alpha gene expression. Inhibits NF-kappa-B activation and the ubiquitin-like protein ISG15, which is an early antiviral protein. The binding with host ISG15 subsequently blocks host ISGylation. In Homo sapiens (Human), this protein is RNA-binding protein OPG065 (OPG065).